A 420-amino-acid polypeptide reads, in one-letter code: MTMIFDKGNVEDFDKELWDAIHAEEERQEHHIELIASENMVSKAVMAAQGSVLTNKYAEGYPGNRYYGGTECVDIVETLAIERAKKLFGAAFANVQAHSGSQANAAAYMALIEAGDTVLGMDLAAGGHLTHGSPVNFSGKTYHFVGYSVDADTEMLNYEAILEQAKAVQPKLIVAGASAYSRSIDFEKFRAIADHVDAYLMVDMAHIAGLVAAGVHPSPVPYAHIVTSTTHKTLRGPRGGLILTNDEALAKKINSAVFPGLQGGPLEHVIAAKAVAFKEALDPAFKDYAQAIIDNTAAMAAVFAQDDRFRLISGGTDNHVFLVDVTKVIANGKLAQNLLDEVNITLNKNAIPFETLSPFKTSGIRIGCAAITSRGMGVKESQTIAHLIIKALVNHDQETILEEVRQEVRQLTDAFPLYKK.

Residues L123 and 127 to 129 (GHL) contribute to the (6S)-5,6,7,8-tetrahydrofolate site. K232 is subject to N6-(pyridoxal phosphate)lysine. 357-359 (SPF) serves as a coordination point for (6S)-5,6,7,8-tetrahydrofolate.

Belongs to the SHMT family. Homodimer. Pyridoxal 5'-phosphate is required as a cofactor.

The protein localises to the cytoplasm. The enzyme catalyses (6R)-5,10-methylene-5,6,7,8-tetrahydrofolate + glycine + H2O = (6S)-5,6,7,8-tetrahydrofolate + L-serine. It participates in one-carbon metabolism; tetrahydrofolate interconversion. The protein operates within amino-acid biosynthesis; glycine biosynthesis; glycine from L-serine: step 1/1. Its function is as follows. Catalyzes the reversible interconversion of serine and glycine with tetrahydrofolate (THF) serving as the one-carbon carrier. This reaction serves as the major source of one-carbon groups required for the biosynthesis of purines, thymidylate, methionine, and other important biomolecules. Also exhibits THF-independent aldolase activity toward beta-hydroxyamino acids, producing glycine and aldehydes, via a retro-aldol mechanism. The protein is Serine hydroxymethyltransferase of Streptococcus pyogenes serotype M2 (strain MGAS10270).